Here is a 227-residue protein sequence, read N- to C-terminus: Cytochrome c oxidase subunit 2 (227 aa).

Residues M1–S14 are Mitochondrial intermembrane-facing. Residues P15–M45 form a helical membrane-spanning segment. Topologically, residues L46–Q59 are mitochondrial matrix. A helical membrane pass occupies residues E60–M87. The Mitochondrial intermembrane segment spans residues D88 to I227. H161, C196, E198, C200, H204, and M207 together coordinate Cu cation. E198 contributes to the Mg(2+) binding site.

This sequence belongs to the cytochrome c oxidase subunit 2 family. As to quaternary structure, component of the cytochrome c oxidase (complex IV, CIV), a multisubunit enzyme composed of 14 subunits. The complex is composed of a catalytic core of 3 subunits MT-CO1, MT-CO2 and MT-CO3, encoded in the mitochondrial DNA, and 11 supernumerary subunits COX4I, COX5A, COX5B, COX6A, COX6B, COX6C, COX7A, COX7B, COX7C, COX8 and NDUFA4, which are encoded in the nuclear genome. The complex exists as a monomer or a dimer and forms supercomplexes (SCs) in the inner mitochondrial membrane with NADH-ubiquinone oxidoreductase (complex I, CI) and ubiquinol-cytochrome c oxidoreductase (cytochrome b-c1 complex, complex III, CIII), resulting in different assemblies (supercomplex SCI(1)III(2)IV(1) and megacomplex MCI(2)III(2)IV(2)). Found in a complex with TMEM177, COA6, COX18, COX20, SCO1 and SCO2. Interacts with TMEM177 in a COX20-dependent manner. Interacts with COX20. Interacts with COX16. Requires Cu cation as cofactor.

The protein localises to the mitochondrion inner membrane. It catalyses the reaction 4 Fe(II)-[cytochrome c] + O2 + 8 H(+)(in) = 4 Fe(III)-[cytochrome c] + 2 H2O + 4 H(+)(out). Its function is as follows. Component of the cytochrome c oxidase, the last enzyme in the mitochondrial electron transport chain which drives oxidative phosphorylation. The respiratory chain contains 3 multisubunit complexes succinate dehydrogenase (complex II, CII), ubiquinol-cytochrome c oxidoreductase (cytochrome b-c1 complex, complex III, CIII) and cytochrome c oxidase (complex IV, CIV), that cooperate to transfer electrons derived from NADH and succinate to molecular oxygen, creating an electrochemical gradient over the inner membrane that drives transmembrane transport and the ATP synthase. Cytochrome c oxidase is the component of the respiratory chain that catalyzes the reduction of oxygen to water. Electrons originating from reduced cytochrome c in the intermembrane space (IMS) are transferred via the dinuclear copper A center (CU(A)) of subunit 2 and heme A of subunit 1 to the active site in subunit 1, a binuclear center (BNC) formed by heme A3 and copper B (CU(B)). The BNC reduces molecular oxygen to 2 water molecules using 4 electrons from cytochrome c in the IMS and 4 protons from the mitochondrial matrix. This is Cytochrome c oxidase subunit 2 (MT-CO2) from Berylmys bowersi (Bower's white-toothed rat).